The following is a 179-amino-acid chain: Dual-action ribosomal maturation protein DarP (179 aa).

This sequence belongs to the DarP family.

Its subcellular location is the cytoplasm. Functionally, member of a network of 50S ribosomal subunit biogenesis factors which assembles along the 30S-50S interface, preventing incorrect 23S rRNA structures from forming. Promotes peptidyl transferase center (PTC) maturation. The protein is Dual-action ribosomal maturation protein DarP of Aliivibrio fischeri (strain ATCC 700601 / ES114) (Vibrio fischeri).